The sequence spans 70 residues: Large ribosomal subunit protein bL31 (70 aa).

Zn(2+)-binding residues include Cys16, Cys18, Cys37, and Cys40.

It belongs to the bacterial ribosomal protein bL31 family. Type A subfamily. Part of the 50S ribosomal subunit. Zn(2+) serves as cofactor.

Its function is as follows. Binds the 23S rRNA. This is Large ribosomal subunit protein bL31 from Shewanella woodyi (strain ATCC 51908 / MS32).